The sequence spans 148 residues: C-C motif chemokine 2 (148 aa).

The signal sequence occupies residues 1 to 23; the sequence is MQVPVMLLGLLFTVAGWSIHVLA. Pyrrolidone carboxylic acid is present on Q24. 2 disulfide bridges follow: C34–C59 and C35–C75. Residue N126 is glycosylated (N-linked (GlcNAc...) asparagine).

Belongs to the intercrine beta (chemokine CC) family. Monomer or homodimer; in equilibrium. Is tethered on endothelial cells by glycosaminoglycan (GAG) side chains of proteoglycans. Interacts with TNFAIP6 (via Link domain). In terms of processing, processing at the N-terminus can regulate receptor and target cell selectivity. Deletion of the N-terminal residue converts it from an activator of basophil to an eosinophil chemoattractant. N-Glycosylated.

Its subcellular location is the secreted. Acts as a ligand for C-C chemokine receptor CCR2. Signals through binding and activation of CCR2 and induces a strong chemotactic response and mobilization of intracellular calcium ions. Exhibits a chemotactic activity for monocytes and basophils but not neutrophils or eosinophils. Plays an important role in mediating peripheral nerve injury-induced neuropathic pain. Increases NMDA-mediated synaptic transmission in both dopamine D1 and D2 receptor-containing neurons, which may be caused by MAPK/ERK-dependent phosphorylation of GRIN2B/NMDAR2B. The polypeptide is C-C motif chemokine 2 (Ccl2) (Mus musculus (Mouse)).